Reading from the N-terminus, the 802-residue chain is MAATRVQPSTREIFTTLEYGPVPESHACALAWLDTHNRLLGHHVNGMWLKPEHRNPAPCQDPITGENLASCLQAEAEDIAAAVEAAKIAFKAWSQLPGAARGQHLTRLAKVVQKHQRLLWTLESLVTGRAVREVRDGDVPLAQQLLQYHAVQAHAQGDALADWQPVGVIGLILPTPFSFLDMMWRVCPALAMGCTVVALVPPAFPTPLLLAQLAGELGSFPGILNVVCGPASLGPVLASQPGVQKVAFCGAVEEGRVLRRTLAGRGAELGLALGTESLLLLTDSADVDSAVEGVVDAVWSDRSLGGLRLLIQESVWDEAMRRLQARMAQIRSGRGLDGAVDMGARGAAARDLAQSFVDEAQSQGGQVFQAGDVPSSSPFFSPALVSGLPPAAPCAQAEVPWPVVMASPFRTVKEALALANGTPRGGSASVWSERLGQALELGYGLQVGTVWINAHGLRDPAVPTGGCKESGSSWHGGPDGLYEYLQPLGTPSQESFLCENINYDTFGLAASSILPSGPETGPSPAPPYGLFVGGRFQSPGTQSSRPIQDSSGKVSSYVAEGGAKDIRGAVEAAHQAAPGWGAQSPRARAGLLWALAAALERRKPVLTSQLERHGAAPTVAKTEVELSVRRLQTWGTRVQDQGQTLQVTGLRGPVLRLREPLGVLAVVCPDEWPLLAFVSLLAPALAHGNAVVLVPSGACPLLALEVCQDIAPLFPAGLVSVVTGDRDHLTRCLALHQDVQALWYFGSAQGSQFVEWASAGNLKSVWVNRGFPRAWDVEVQGAGQELSLHAARTKALWLPMGD.

It belongs to the aldehyde dehydrogenase family. As to quaternary structure, interacts with SPG21.

The chain is Aldehyde dehydrogenase family 16 member A1 (Aldh16a1) from Mus musculus (Mouse).